Consider the following 207-residue polypeptide: Guanylate kinase (207 aa).

One can recognise a Guanylate kinase-like domain in the interval 4-184 (GTLYIVSAPS…ALSDLKTIIR (181 aa)). 11–18 (APSGAGKS) contributes to the ATP binding site.

The protein belongs to the guanylate kinase family.

It is found in the cytoplasm. It catalyses the reaction GMP + ATP = GDP + ADP. Essential for recycling GMP and indirectly, cGMP. This Yersinia pestis bv. Antiqua (strain Antiqua) protein is Guanylate kinase.